Consider the following 218-residue polypeptide: Glutathione S-transferase U24 (218 aa).

Residues 3 to 82 (DEVILLDFWA…YIDETWPDNN (80 aa)) form the GST N-terminal domain. Residues 13–14 (SM), 39–40 (NK), 53–54 (KI), and 66–67 (ES) each bind glutathione. The 128-residue stretch at 88–215 (DPYKRAHAKF…TFISERRKKL (128 aa)) folds into the GST C-terminal domain. Thr148 carries the post-translational modification Phosphothreonine.

This sequence belongs to the GST superfamily. Tau family.

It is found in the cytoplasm. It localises to the cytosol. It carries out the reaction RX + glutathione = an S-substituted glutathione + a halide anion + H(+). Functionally, may be involved in the conjugation of reduced glutathione to a wide number of exogenous and endogenous hydrophobic electrophiles and have a detoxification role against certain herbicides. The protein is Glutathione S-transferase U24 (GSTU24) of Arabidopsis thaliana (Mouse-ear cress).